The sequence spans 1964 residues: Neurogenic locus notch homolog protein 4 (1964 aa).

The first 20 residues, 1-20 (MQPQLLLLLLLPLNFPVILT), serve as a signal peptide directing secretion. EGF-like domains lie at 21–60 (RELL…ETCQ), 61–112 (FPDP…DRCQ), 115–152 (LEEL…EQCQ), and 153–189 (LRDF…HTCE). Residues 21–1443 (RELLCGGSPE…TRPSANQLPW (1423 aa)) are Extracellular-facing. Intrachain disulfides connect C25/C38, C32/C48, C50/C59, C65/C77, C71/C100, C102/C111, C119/C130, C124/C140, C142/C151, C157/C168, C162/C177, C179/C188, C195/C208, C202/C217, C219/C228, C235/C246, C240/C259, C261/C270, C277/C288, C282/C297, C299/C308, C315/C329, C323/C338, C340/C349, C356/C367, C361/C376, C378/C387, C393/C404, C398/C415, C417/C426, C433/C449, C443/C458, C460/C469, C476/C487, C481/C496, C498/C507, C514/C525, C519/C534, C536/C545, C552/C563, C557/C572, C574/C583, C590/C601, C595/C610, C612/C621, C626/C637, C631/C646, C648/C655, C662/C669, C664/C674, C676/C685, C692/C703, C697/C712, C714/C723, C730/C741, C735/C750, C752/C761, C768/C779, C773/C788, C790/C799, C807/C818, C812/C827, C829/C838, C845/C856, C850/C865, C867/C876, C882/C903, C897/C912, C914/C923, C930/C941, C935/C950, C952/C961, C968/C979, C973/C988, C990/C999, C1006/C1019, C1011/C1028, C1030/C1039, C1046/C1057, C1051/C1069, C1071/C1080, C1087/C1098, C1092/C1110, C1112/C1121, C1130/C1142, C1136/C1155, C1157/C1166, C1174/C1187, C1183/C1199, C1210/C1234, C1216/C1229, C1225/C1241, C1247/C1273, C1255/C1268, and C1264/C1280. The 39-residue stretch at 191–229 (DINECFLEPGPCPQGTSCHNTLGSYQCLCPVGQEGPQCK) folds into the EGF-like 5; calcium-binding domain. The EGF-like 6 domain occupies 231-271 (RKGACPPGSCLNGGTCQLVPEGHSTFHLCLCPPGFTGLDCE). The region spanning 273–309 (NPDDCVRHQCQNGATCLDGLDTYTCLCPKTWKGWDCS) is the EGF-like 7; calcium-binding domain. The EGF-like 8; calcium-binding domain occupies 311-350 (DIDECEARGPPRCRNGGTCQNTAGSFHCVCVSGWGGAGCE). The EGF-like 9; calcium-binding domain occupies 352 to 388 (NLDDCAAATCAPGSTCIDRVGSFSCLCPPGRTGLLCH). One can recognise an EGF-like 10 domain in the interval 389 to 427 (LEDMCLSQPCHVNAQCSTNPLTGSTLCICQPGYSGSTCH). One can recognise an EGF-like 11; calcium-binding domain in the interval 429 to 470 (DLDECQMAQQGPSPCEHGGSCINTPGSFNCLCLPGYTGSRCE). In terms of domain architecture, EGF-like 12; calcium-binding spans 472–508 (DHNECLSQPCHPGSTCLDLLATFHCLCPPGLEGRLCE). The 37-residue stretch at 510–546 (EVNECTSNPCLNQAACHDLLNGFQCLCLPGFTGARCE) folds into the EGF-like 13; calcium-binding domain. Positions 548–584 (DMDECSSTPCANGGRCRDQPGAFYCECLPGFEGPHCE) constitute an EGF-like 14; calcium-binding domain. Residues 586–622 (EVDECLSDPCPVGASCLDLPGAFFCLCRPGFTGQLCE) enclose the EGF-like 15; calcium-binding domain. EGF-like domains follow at residues 623-656 (VPLC…PGCV), 658-686 (AEDN…PECE), 688-724 (ELGG…LTCS), 726-762 (EVTA…RHCQ), 764-800 (AVDH…LHCE), 803-839 (TNPS…SSCQ), 841-877 (LIDL…ALCD), 878-924 (FPLS…KLCQ), 926-962 (NVNP…QNCS), 964-1000 (VLDA…LRCE), 1002-1040 (DVDE…QRCE), 1042-1081 (EMDL…PTCS), 1083-1122 (KALS…PDCL), and 1126-1167 (APPG…PRCQ). The N-linked (GlcNAc...) asparagine glycan is linked to N711. N960 is a glycosylation site (N-linked (GlcNAc...) asparagine). Residue N1139 is glycosylated (N-linked (GlcNAc...) asparagine). LNR repeat units follow at residues 1166-1209 (CQRP…PWKG), 1210-1241 (CPPH…GYDC), and 1247-1287 (CIPA…GEDS). The disordered stretch occupies residues 1345–1369 (EELSGARDSSSWERQAPPTQPLGKE). The helical transmembrane segment at 1444–1464 (PILCSPVVGVLLLALGALLVL) threads the bilayer. The Cytoplasmic portion of the chain corresponds to 1465 to 1964 (QLIRRRRREH…PLNSVVRNLN (500 aa)). The segment at 1516-1535 (VDEDGVAMCSGPEEGEAEET) is disordered. ANK repeat units follow at residues 1628–1657 (TGET…NPNQ), 1661–1691 (AGRT…TVDA), 1695–1724 (DGTT…DVGA), 1728–1757 (RGKT…DKDA), and 1761–1790 (REQT…ARGL). Residues 1879–1907 (RSGSCGGPTTRGRRFSAGSRGRRGARASQ) form a disordered region.

Belongs to the NOTCH family. In terms of assembly, heterodimer of a C-terminal fragment N(TM) and a N-terminal fragment N(EC) which are probably linked by disulfide bonds. Interacts with MAML1, MAML2 and MAML3 which act as transcriptional coactivators for NOTCH4. Synthesized in the endoplasmic reticulum as an inactive form which is proteolytically cleaved by a furin-like convertase in the trans-Golgi network before it reaches the plasma membrane to yield an active, ligand-accessible form. Cleavage results in a C-terminal fragment N(TM) and a N-terminal fragment N(EC). Following ligand binding, it is cleaved by TNF-alpha converting enzyme (TACE) to yield a membrane-associated intermediate fragment called notch extracellular truncation (NEXT). This fragment is then cleaved by presenilin dependent gamma-secretase to release a notch-derived peptide containing the intracellular domain (NICD) from the membrane. In terms of processing, phosphorylated. As to expression, highly expressed in lung, moderately in heart kidney, and at lower levels in the ovary and skeletal muscle. A very low expression is seen in the brain, intestine, liver and testis.

It is found in the cell membrane. The protein resides in the nucleus. Functions as a receptor for membrane-bound ligands Jagged1, Jagged2 and Delta1 to regulate cell-fate determination. Upon ligand activation through the released notch intracellular domain (NICD) it forms a transcriptional activator complex with RBPJ/RBPSUH and activates genes of the enhancer of split locus. Affects the implementation of differentiation, proliferation and apoptotic programs. May regulate branching morphogenesis in the developing vascular system. In Mus musculus (Mouse), this protein is Neurogenic locus notch homolog protein 4.